The chain runs to 141 residues: Galactose-6-phosphate isomerase subunit LacA 1 (141 aa).

Belongs to the LacAB/RpiB family. As to quaternary structure, heteromultimeric protein consisting of LacA and LacB.

It carries out the reaction aldehydo-D-galactose 6-phosphate = keto-D-tagatose 6-phosphate. Its pathway is carbohydrate metabolism; D-galactose 6-phosphate degradation; D-tagatose 6-phosphate from D-galactose 6-phosphate: step 1/1. The sequence is that of Galactose-6-phosphate isomerase subunit LacA 1 from Streptococcus pyogenes serotype M3 (strain SSI-1).